The following is a 370-amino-acid chain: MSDKIKDKVDLLGMDRAELTEFFASIGEKPFRAAQVMKWIHQFGVSDFEEMTNISKSLREKLSKTALIRTPKIVSEQRSADGTIKWLLEVDNHNCVEAVFIPEKSRGTLCISSQVGCALECSFCSTGQQGFNRNLENWEIVAQMWVANKALGCKPKEERIISNVVFMGMGEPLLNVKHTFPTARILMDDNAYGLSKRRVTISTAGVVPAIDKIKESLDVSLAISLHAPNNALRDELVPINKKYPLEVLMPALHRYVEGGHSKKHVTVEYVMLDHVNDRLEHAQQLIELLGDLPCKVNLIPFNPFPNTDYKRSSNNAVHRFKDALMEAGVNCTVRRTRGDDIDAACGQLAGKVKDRTKRTLQTVNLDKLHG.

The active-site Proton acceptor is glutamate 97. One can recognise a Radical SAM core domain in the interval 103–340 (EKSRGTLCIS…CTVRRTRGDD (238 aa)). Residues cysteine 110 and cysteine 345 are joined by a disulfide bond. Residues cysteine 117, cysteine 121, and cysteine 124 each contribute to the [4Fe-4S] cluster site. S-adenosyl-L-methionine contacts are provided by residues 170 to 171 (GE), serine 202, 224 to 226 (SLH), and asparagine 302. Cysteine 345 (S-methylcysteine intermediate) is an active-site residue.

It belongs to the radical SAM superfamily. RlmN family. It depends on [4Fe-4S] cluster as a cofactor.

The protein resides in the cytoplasm. The catalysed reaction is adenosine(2503) in 23S rRNA + 2 reduced [2Fe-2S]-[ferredoxin] + 2 S-adenosyl-L-methionine = 2-methyladenosine(2503) in 23S rRNA + 5'-deoxyadenosine + L-methionine + 2 oxidized [2Fe-2S]-[ferredoxin] + S-adenosyl-L-homocysteine. It catalyses the reaction adenosine(37) in tRNA + 2 reduced [2Fe-2S]-[ferredoxin] + 2 S-adenosyl-L-methionine = 2-methyladenosine(37) in tRNA + 5'-deoxyadenosine + L-methionine + 2 oxidized [2Fe-2S]-[ferredoxin] + S-adenosyl-L-homocysteine. Specifically methylates position 2 of adenine 2503 in 23S rRNA and position 2 of adenine 37 in tRNAs. m2A2503 modification seems to play a crucial role in the proofreading step occurring at the peptidyl transferase center and thus would serve to optimize ribosomal fidelity. The sequence is that of Dual-specificity RNA methyltransferase RlmN from Hydrogenovibrio crunogenus (strain DSM 25203 / XCL-2) (Thiomicrospira crunogena).